Here is a 369-residue protein sequence, read N- to C-terminus: S-(hydroxymethyl)glutathione dehydrogenase (369 aa).

The Zn(2+) site is built by C40, H62, C92, C95, C98, C106, and C169.

This sequence belongs to the zinc-containing alcohol dehydrogenase family. Class-III subfamily. As to quaternary structure, homodimer. Requires Zn(2+) as cofactor.

Its subcellular location is the cytoplasm. It catalyses the reaction S-(hydroxymethyl)glutathione + NADP(+) = S-formylglutathione + NADPH + H(+). The catalysed reaction is S-(hydroxymethyl)glutathione + NAD(+) = S-formylglutathione + NADH + H(+). It carries out the reaction a primary alcohol + NAD(+) = an aldehyde + NADH + H(+). The enzyme catalyses a secondary alcohol + NAD(+) = a ketone + NADH + H(+). It catalyses the reaction S-nitrosoglutathione + NADH + H(+) = S-(hydroxysulfenamide)glutathione + NAD(+). Its function is as follows. Has high formaldehyde dehydrogenase activity in the presence of glutathione and catalyzes the oxidation of normal alcohols in a reaction that is not GSH-dependent. In addition, hemithiolacetals other than those formed from GSH, including omega-thiol fatty acids, also are substrates. Also acts as a S-nitroso-glutathione reductase by catalyzing the NADH-dependent reduction of S-nitrosoglutathione. This chain is S-(hydroxymethyl)glutathione dehydrogenase (frmA), found in Escherichia coli O6:H1 (strain CFT073 / ATCC 700928 / UPEC).